We begin with the raw amino-acid sequence, 776 residues long: Cullin-1 (776 aa).

R63 carries the post-translational modification Omega-N-methylarginine. The region spanning 706–766 is the Cullin neddylation domain; sequence DRKLLIQAAI…IEKEYLERVD (61 aa). K720 participates in a covalent cross-link: Glycyl lysine isopeptide (Lys-Gly) (interchain with G-Cter in NEDD8).

It belongs to the cullin family. In terms of assembly, component of multiple Cul1-RING E3 ubiquitin-protein ligase complexes commonly known as SCF (SKP1-CUL1-F-box) complexes, consisting of CUL1, SKP1, RBX1 and a variable F-box domain-containing protein as substrate-specific subunit. Component of the SCF(FBXW11) complex containing FBXW11. Component of the SCF(SKP2) complex containing SKP2, in which it interacts directly with SKP1, SKP2 and RBX1. Component of the SCF(FBXW2) complex containing FBXW2. Component of the SCF(FBXO32) complex containing FBXO32. Component of the probable SCF(FBXO7) complex containing FBXO7. Component of the SCF(FBXO10) complex containing FBXO10. Component of the SCF(FBXO11) complex containing FBXO11. Component of the SCF(FBXO25) complex containing FBXO25. Component of the SCF(FBXO33) complex containing FBXO33. Component of the probable SCF(FBXO4) complex containing FBXO4. Component of the SCF(FBXO44) complex, composed of SKP1, CUL1 and FBXO44. Component of the SCF(BTRC) complex, composed of SKP1, CUL1 and BTRC. This complex binds phosphorylated NFKBIA. Part of a SCF complex consisting of CUL1, RBX1, SKP1 and FBXO2. Component of a SCF(SKP2)-like complex containing CUL1, SKP1, TRIM21 and SKP2. Component of the SCF(FBXO17) complex, composed of SKP1, CUL1 and FBXO17. Component of the SCF(FBXO27) complex, composed of SKP1, CUL1 and FBXO27. Component of the SCF(CCNF) complex consisting of CUL1, RBX1, SKP1 and CCNF. Interacts with CCNF. Component of the SCF(FBXL3) complex composed of CUL1, SKP1, RBX1 and FBXL3. Component of the SCF(FBXL21) complex composed of CUL1, SKP1, RBX1 and FBXL21. Component of the SCF(FBXO9) composed of CUL1, SKP1, RBX1 and FBXO9. Component of the SCF(FBXW7) composed of CUL1, SKP1, RBX1 and FBXW7. Component of the SCF(FBXO31) complex composed of CUL1, SKP1, RBX1 and FBXO31. Interacts with CHEK2; mediates CHEK2 ubiquitination and regulates its function. Part of a complex with TIP120A/CAND1 and RBX1. The unneddylated form interacts with TIP120A/CAND1 and the interaction mediates the exchange of the F-box substrate-specific subunit. Can self-associate. Interacts with FBXW8. Interacts with RNF7. Interacts with TRIM21. Interacts with COPS2. Interacts with DCUN1D1 and UBE2M. Interacts with DCUN1D3. Interacts with DCUN1D4. Identified in a complex with RBX1 and GLMN. Interacts with CEP68 as part of the SCF(FBXW11) complex; the interaction is probably mediated by FBXW11 and the complex also contains CDK5RAP2 and PCNT. Interacts (when neddylated) with ARIH1; leading to activate the E3 ligase activity of ARIH1. Interacts with COPS9. Interacts with UBXN1. Interacts with KAT7, probably as part of an SCF complex; the interaction mediates KAT7 ubiquitination. Interacts with NOTCH2. Part of a complex that contains DCUN1D5, CUL1 and RBX1; this interaction is bridged by CUL1. Interacts (unneddylated form) with DCUN1D1, DCUN1D2, DCUN1D3, DCUN1D4 and DCUN1D5; these interactions promote the cullin neddylation. Interacts (via the C-terminal domain) with CUL7; the interaction seems to be mediated by FBXW8; it is likely specific to FBXW8, but not other F-box proteins. Interacts with UBR2, as part of SCF(BTRC) complex; the interaction mediates 'Lys-48'-linked ubiquitination of UBR2 and is regulated by DUSP22 in the T-cell receptor signaling pathway. (Microbial infection) Interacts with murine cytomegalovirus M48. In terms of processing, neddylated; which enhances the ubiquitination activity of SCF. Neddylation prevents binding of the inhibitor CAND1. Neddylation leads to structural rearrangment in the complex that allows interaction between the E2 ubiquitin-conjugating enzyme and the acceptor ubiquitin. Deneddylated via its interaction with the COP9 signalosome (CSN) complex. (Microbial infection) Deneddylated by murine cytomegalovirus M48 leading to a S-phase-like environment that is required for efficient replication of the viral genome. Embryo fibroblasts and embryo preadipocytes.

The protein operates within protein modification; protein ubiquitination. Functionally, core component of multiple cullin-RING-based SCF (SKP1-CUL1-F-box protein) E3 ubiquitin-protein ligase complexes, which mediate the ubiquitination of proteins involved in cell cycle progression, signal transduction and transcription. SCF complexes and ARIH1 collaborate in tandem to mediate ubiquitination of target proteins. In the SCF complex, serves as a rigid scaffold that organizes the SKP1-F-box protein and RBX1 subunits. May contribute to catalysis through positioning of the substrate and the ubiquitin-conjugating enzyme. The E3 ubiquitin-protein ligase activity of the complex is dependent on the neddylation of the cullin subunit and exchange of the substrate recognition component is mediated by TIP120A/CAND1. The functional specificity of the SCF complex depends on the F-box protein as substrate recognition component. SCF(BTRC) and SCF(FBXW11) direct ubiquitination of CTNNB1 and participate in Wnt signaling. SCF(FBXW11) directs ubiquitination of phosphorylated NFKBIA. SCF(BTRC) directs ubiquitination of NFKBIB, NFKBIE, ATF4, SMAD3, SMAD4, CDC25A, FBXO5 and probably NFKB2. SCF(BTRC) and/or SCF(FBXW11) direct ubiquitination of CEP68. SCF(SKP2) directs ubiquitination of phosphorylated CDKN1B/p27kip and is involved in regulation of G1/S transition. SCF(SKP2) directs ubiquitination of ORC1, CDT1, RBL2, ELF4, CDKN1A, RAG2, FOXO1A, and probably MYC and TAL1. SCF(FBXW7) directs ubiquitination of cyclin E, NOTCH1 released notch intracellular domain (NICD), and probably PSEN1. SCF(FBXW2) directs ubiquitination of GCM1. SCF(FBXO32) directs ubiquitination of MYOD1. SCF(FBXO7) directs ubiquitination of BIRC2 and DLGAP5. SCF(FBXO33) directs ubiquitination of YBX1. SCF(FBXO1) directs ubiquitination of BCL6 and DTL but does not seem to direct ubiquitination of TP53. SCF(BTRC) mediates the ubiquitination of NFKBIA at 'Lys-21' and 'Lys-22'; the degradation frees the associated NFKB1-RELA dimer to translocate into the nucleus and to activate transcription. SCF(CCNF) directs ubiquitination of CCP110. SCF(FBXL3) and SCF(FBXL21) direct ubiquitination of CRY1 and CRY2. SCF(FBXO9) directs ubiquitination of TTI1 and TELO2. SCF(FBXO10) directs ubiquitination of BCL2. Neddylated CUL1-RBX1 ubiquitinates p53/TP53 recruited by Cul7-RING(FBXW8) complex. SCF(BTRC) directs 'Lys-48'-linked ubiquitination of UBR2 in the T-cell receptor signaling pathway. The SCF(FBXO31) protein ligase complex specifically mediates the ubiquitination of proteins amidated at their C-terminus in response to oxidative stress. The chain is Cullin-1 (Cul1) from Mus musculus (Mouse).